A 223-amino-acid chain; its full sequence is Cytidylate kinase (223 aa).

Position 12 to 20 (12 to 20 (GPSGVGKGT)) interacts with ATP.

This sequence belongs to the cytidylate kinase family. Type 1 subfamily.

The protein localises to the cytoplasm. It catalyses the reaction CMP + ATP = CDP + ADP. It carries out the reaction dCMP + ATP = dCDP + ADP. This is Cytidylate kinase from Xylella fastidiosa (strain 9a5c).